A 517-amino-acid chain; its full sequence is Amidophosphoribosyltransferase (517 aa).

N-acetylmethionine is present on Met-1. Positions 1–11 (MELEELGIREE) are excised as a propeptide. The active-site Nucleophile is the Cys-12. The Glutamine amidotransferase type-2 domain occupies 12 to 261 (CGVFGCIASG…PGEIVEISRH (250 aa)). Cys-280 provides a ligand contact to [4Fe-4S] cluster. The Mg(2+) site is built by Ser-327, Asp-389, and Asp-390. [4Fe-4S] cluster-binding residues include Cys-426, Cys-503, and Cys-506.

It in the C-terminal section; belongs to the purine/pyrimidine phosphoribosyltransferase family. As to quaternary structure, homotetramer. Requires Mg(2+) as cofactor. It depends on [4Fe-4S] cluster as a cofactor. Ubiquitously expressed.

It carries out the reaction 5-phospho-beta-D-ribosylamine + L-glutamate + diphosphate = 5-phospho-alpha-D-ribose 1-diphosphate + L-glutamine + H2O. It functions in the pathway purine metabolism; IMP biosynthesis via de novo pathway; N(1)-(5-phospho-D-ribosyl)glycinamide from 5-phospho-alpha-D-ribose 1-diphosphate: step 1/2. Functionally, catalyzes the formation of phosphoribosylamine from phosphoribosylpyrophosphate (PRPP) and glutamine. The chain is Amidophosphoribosyltransferase (PPAT) from Homo sapiens (Human).